The primary structure comprises 685 residues: Mitotic interactor and substrate of PLK1 (685 aa).

Ser-78 bears the Phosphoserine; by CDK1 mark. Disordered stretches follow at residues 155 to 181 and 207 to 253; these read SGTV…STPL and NKEV…QGKG. Thr-172 carries the phosphothreonine; by CDK1 modification. Thr-179 carries the phosphothreonine modification. Position 214 is a phosphoserine; by CDK1 (Ser-214). Position 219 is a phosphothreonine (Thr-219). A Phosphoserine; by CDK1 modification is found at Ser-284. A Phosphothreonine; by CDK1 modification is found at Thr-287. The interval 345-499 is disordered; that stretch reads GRPSLYVQRD…PWKLPRGSPQ (155 aa). Ser-348 carries the phosphoserine modification. Over residues 355–371 the composition is skewed to basic and acidic residues; that stretch reads MVQETQREEDHRREGLH. Thr-377 is subject to Phosphothreonine; by CDK1. Ser-382 carries the phosphoserine modification. Residues 392–417 show a composition bias toward low complexity; it reads ALSSDSILSPDSILSPAPDARAADPA. Ser-394, Ser-395, and Ser-397 each carry phosphoserine; by PLK1. 2 positions are modified to phosphoserine: Ser-406 and Ser-436. A compositionally biased stretch (polar residues) spans 454 to 469; sequence SGLSTVDTEAATSPKA. Ser-477 bears the Phosphoserine; by PLK1 mark. Over residues 478 to 488 the composition is skewed to polar residues; it reads ESSGKPMSTKQ. Phosphoserine occurs at positions 547 and 549. Residues 551–575 are a coiled coil; sequence DLLERERESVLRREREVAEERRNAL. Disordered regions lie at residues 575–607 and 629–651; these read LFPE…SYSV and PVDS…NPSD. The residue at position 581 (Ser-581) is a Phosphoserine; by PLK1. Phosphothreonine is present on Thr-583. The span at 589 to 607 shows a compositional bias: polar residues; that stretch reads DQNSRSSSQASGITGSYSV. Ser-592 bears the Phosphoserine; by PLK1 mark. Ser-681 is subject to Phosphoserine.

It belongs to the MISP family. Associates with F-actin. Interacts with DCTN1; this interaction regulates DCTN1 distribution at the cell cortex. Interacts with PTK2/FAK and MAPRE1. Phosphorylated by CDK1 and PLK1. CDK1 is the priming kinase for PLK1 phosphorylation. Phosphorylation by PLK1 is required for proper spindle orientation at metaphase.

It is found in the cell junction. It localises to the focal adhesion. The protein resides in the cytoplasm. Its subcellular location is the cytoskeleton. The protein localises to the cell cortex. Functionally, plays a role in mitotic spindle orientation and mitotic progression. Regulates the distribution of dynactin at the cell cortex in a PLK1-dependent manner, thus stabilizing cortical and astral microtubule attachments required for proper mitotic spindle positioning. May link microtubules to the actin cytospkeleton and focal adhesions. May be required for directed cell migration and centrosome orientation. May also be necessary for proper stacking of the Golgi apparatus. The chain is Mitotic interactor and substrate of PLK1 from Pongo abelii (Sumatran orangutan).